The following is a 924-amino-acid chain: Protein translocase subunit SecA (924 aa).

ATP is bound by residues Q87, 105–109 (GEGKT), and D515. 4 residues coordinate Zn(2+): C908, C910, C919, and H920.

It belongs to the SecA family. As to quaternary structure, monomer and homodimer. Part of the essential Sec protein translocation apparatus which comprises SecA, SecYEG and auxiliary proteins SecDF-YajC and YidC. Zn(2+) serves as cofactor.

The protein resides in the cell inner membrane. It localises to the cytoplasm. It catalyses the reaction ATP + H2O + cellular proteinSide 1 = ADP + phosphate + cellular proteinSide 2.. Part of the Sec protein translocase complex. Interacts with the SecYEG preprotein conducting channel. Has a central role in coupling the hydrolysis of ATP to the transfer of proteins into and across the cell membrane, serving both as a receptor for the preprotein-SecB complex and as an ATP-driven molecular motor driving the stepwise translocation of polypeptide chains across the membrane. In Cupriavidus pinatubonensis (strain JMP 134 / LMG 1197) (Cupriavidus necator (strain JMP 134)), this protein is Protein translocase subunit SecA.